A 79-amino-acid chain; its full sequence is RNA-binding protein KhpA (79 aa).

In terms of domain architecture, KH spans 32-79 (FLEYHLNLDQSDVGRVIGRKGRTISAIRTIVYSVPTEYKKVRIVIDEK).

It belongs to the KhpA RNA-binding protein family. In terms of assembly, forms a complex with KhpB. KhpA and KhpB colocalize throughout the cell cycle, with some increase at midcell in dividing cells.

The protein localises to the cytoplasm. In terms of biological role, a probable RNA chaperone. Forms a complex with KhpB which presumably binds to about 170 cellular RNAs (mRNA, tRNA intergenic RNA and sRNAs); the proteins alone each bind the same set of RNAs. A mutation in this gene suppresses the requirement for PBP2b (penA, a transpeptidase) in peripheral peptidoglycan (PG) synthesis. Probably plays a role in PG homeostasis and regulating peripheral PG synthesis. The polypeptide is RNA-binding protein KhpA (Streptococcus pneumoniae serotype 2 (strain D39 / NCTC 7466)).